The primary structure comprises 291 residues: 4-diphosphocytidyl-2-C-methyl-D-erythritol kinase (291 aa).

Residue Lys-10 is part of the active site. 100-110 serves as a coordination point for ATP; that stretch reads PIGGGLGGGSS. Asp-142 is a catalytic residue.

This sequence belongs to the GHMP kinase family. IspE subfamily. As to quaternary structure, homodimer.

The catalysed reaction is 4-CDP-2-C-methyl-D-erythritol + ATP = 4-CDP-2-C-methyl-D-erythritol 2-phosphate + ADP + H(+). It functions in the pathway isoprenoid biosynthesis; isopentenyl diphosphate biosynthesis via DXP pathway; isopentenyl diphosphate from 1-deoxy-D-xylulose 5-phosphate: step 3/6. Its function is as follows. Catalyzes the phosphorylation of the position 2 hydroxy group of 4-diphosphocytidyl-2C-methyl-D-erythritol. The protein is 4-diphosphocytidyl-2-C-methyl-D-erythritol kinase of Hamiltonella defensa subsp. Acyrthosiphon pisum (strain 5AT).